Consider the following 97-residue polypeptide: Peptide YY (97 aa).

The first 28 residues, 1-28, serve as a signal peptide directing secretion; sequence MMSGRRSWPAMATVLLTLLVCLGELVDA. At Ser-41 the chain carries Phosphoserine. The residue at position 64 (Phe-64) is a Phenylalanine amide. Positions 68–97 are excised as a propeptide; sequence DFSEALLSILLFPDREDPPVKSRPEGAYLW.

It belongs to the NPY family.

It is found in the secreted. In terms of biological role, this gut peptide inhibits exocrine pancreatic secretion, has a vasoconstrictory action and inhibitis jejunal and colonic mobility. This is Peptide YY (PYY) from Bos taurus (Bovine).